A 285-amino-acid polypeptide reads, in one-letter code: Putative phosphatase MG125 (285 aa).

Asp-8 (nucleophile) is an active-site residue. Residue Asp-8 coordinates Mg(2+). Position 9 (Leu-9) interacts with phosphate. Asp-10 contributes to the Mg(2+) binding site. Residues Thr-44–Gly-45 and Lys-205 each bind phosphate. Positions 228 and 229 each coordinate Mg(2+). Asn-231 is a binding site for phosphate.

It belongs to the HAD-like hydrolase superfamily. Cof family. The cofactor is Mg(2+).

The polypeptide is Putative phosphatase MG125 (Mycoplasma genitalium (strain ATCC 33530 / DSM 19775 / NCTC 10195 / G37) (Mycoplasmoides genitalium)).